The sequence spans 223 residues: Cytidylate kinase (223 aa).

Position 12 to 20 (12 to 20 (GPSGVGKGT)) interacts with ATP.

It belongs to the cytidylate kinase family. Type 1 subfamily.

Its subcellular location is the cytoplasm. The catalysed reaction is CMP + ATP = CDP + ADP. The enzyme catalyses dCMP + ATP = dCDP + ADP. The sequence is that of Cytidylate kinase from Xylella fastidiosa (strain M12).